Here is a 456-residue protein sequence, read N- to C-terminus: Coenzyme F420 hydrogenase subunit alpha (456 aa).

Ni(2+)-binding residues include C63, C66, C432, and C435.

It belongs to the [NiFe]/[NiFeSe] hydrogenase large subunit family. As to quaternary structure, pentamer of two alpha chains, two beta chains and a gamma chain. It depends on Ni(2+) as a cofactor. Iron-sulfur cluster is required as a cofactor. The cofactor is FAD.

Its subcellular location is the cell membrane. It catalyses the reaction oxidized coenzyme F420-(gamma-L-Glu)(n) + H2 + H(+) = reduced coenzyme F420-(gamma-L-Glu)(n). Functionally, reduces the physiological low-potential two-electron acceptor coenzyme F420, and the artificial one-electron acceptor methylviologen. In Methanosarcina barkeri (strain Fusaro / DSM 804), this protein is Coenzyme F420 hydrogenase subunit alpha (frhA).